The primary structure comprises 293 residues: Ribosomal protein L11 methyltransferase (293 aa).

S-adenosyl-L-methionine-binding residues include threonine 145, glycine 166, aspartate 188, and asparagine 230.

It belongs to the methyltransferase superfamily. PrmA family.

Its subcellular location is the cytoplasm. The enzyme catalyses L-lysyl-[protein] + 3 S-adenosyl-L-methionine = N(6),N(6),N(6)-trimethyl-L-lysyl-[protein] + 3 S-adenosyl-L-homocysteine + 3 H(+). In terms of biological role, methylates ribosomal protein L11. The polypeptide is Ribosomal protein L11 methyltransferase (Actinobacillus pleuropneumoniae serotype 3 (strain JL03)).